Consider the following 484-residue polypeptide: Ankyrin repeat protein T5 (484 aa).

7 ANK repeats span residues 33–64 (MDDT…DVNG), 68–102 (TRTS…DVNA), 106–138 (DGRY…LVCV), 142–173 (DGCG…SIHD), 178–211 (YGFN…NSSQ), 251–280 (LDFT…NPNV), and 284–313 (LGNS…TPDA).

In Rabbit fibroma virus (strain Kasza) (RFV), this protein is Ankyrin repeat protein T5.